The following is a 233-amino-acid chain: Outer membrane protein MIP (233 aa).

Residues 1–20 form the signal peptide; it reads MKMKLVTAAVMGLAMSTAMA. The PPIase FKBP-type domain occupies 144–233; the sequence is SDTVTVEYTG…IHLISVKKSS (90 aa).

It belongs to the FKBP-type PPIase family.

The protein resides in the cell outer membrane. The enzyme catalyses [protein]-peptidylproline (omega=180) = [protein]-peptidylproline (omega=0). With respect to regulation, strongly inhibited by FK506 but is completely resistant to cyclosporin A. Essential virulence factor associated with macrophage infectivity. Exhibits PPIase activity. This is Outer membrane protein MIP (mip) from Legionella pneumophila subsp. pneumophila (strain Philadelphia 1 / ATCC 33152 / DSM 7513).